The chain runs to 285 residues: Meiotically up-regulated gene 74 protein (285 aa).

The protein resides in the cytoplasm. Has a role in meiosis. In Schizosaccharomyces pombe (strain 972 / ATCC 24843) (Fission yeast), this protein is Meiotically up-regulated gene 74 protein (mug74).